The following is a 693-amino-acid chain: Elongation factor G (693 aa).

The 281-residue stretch at 6–286 folds into the tr-type G domain; that stretch reads KYTRNIGIAA…AICRYLPSPI (281 aa). GTP-binding positions include 15–22, 83–87, and 137–140; these read AHIDAGKT, DTPGH, and NKMD.

Belongs to the TRAFAC class translation factor GTPase superfamily. Classic translation factor GTPase family. EF-G/EF-2 subfamily.

It is found in the cytoplasm. Catalyzes the GTP-dependent ribosomal translocation step during translation elongation. During this step, the ribosome changes from the pre-translocational (PRE) to the post-translocational (POST) state as the newly formed A-site-bound peptidyl-tRNA and P-site-bound deacylated tRNA move to the P and E sites, respectively. Catalyzes the coordinated movement of the two tRNA molecules, the mRNA and conformational changes in the ribosome. In Karelsulcia muelleri (strain GWSS) (Sulcia muelleri), this protein is Elongation factor G.